The chain runs to 875 residues: Probable inorganic carbon transporter subunit DabA (875 aa).

Residues C380, D382, H563, and C578 each contribute to the Zn(2+) site.

This sequence belongs to the inorganic carbon transporter (TC 9.A.2) DabA family. As to quaternary structure, forms a complex with DabB. It depends on Zn(2+) as a cofactor.

The protein localises to the cell membrane. Functionally, part of an energy-coupled inorganic carbon pump. This chain is Probable inorganic carbon transporter subunit DabA, found in Geobacillus thermodenitrificans (strain NG80-2).